Reading from the N-terminus, the 130-residue chain is Small ribosomal subunit protein uS8 (130 aa).

The protein belongs to the universal ribosomal protein uS8 family.

The chain is Small ribosomal subunit protein uS8 (rps22) from Agaricus bisporus (White button mushroom).